The sequence spans 257 residues: Putative hydro-lyase Bcen2424_3550 (257 aa).

The protein belongs to the D-glutamate cyclase family.

This is Putative hydro-lyase Bcen2424_3550 from Burkholderia cenocepacia (strain HI2424).